The primary structure comprises 118 residues: Beta-defensin 126 (118 aa).

The N-terminal stretch at 1–20 (MKSLLFTLAVFMLLAQLVSG) is a signal peptide. The in vitro binds to LPS, mediates antimicrobial activity and inhibits LPS-mediated inflammation stretch occupies residues 21 to 63 (SWYVKKCLNDVGICKKKCKPEELHVKNGWAMCGKQRDCCVPAD). Cystine bridges form between cysteine 27-cysteine 58, cysteine 34-cysteine 52, and cysteine 38-cysteine 59.

Belongs to the beta-defensin family. In terms of assembly, homodimer or homooligomer; disulfide-linked. In terms of processing, O-glycosylated; glycans contain alpha(2,3)-linked sialic acids.

The protein localises to the secreted. In terms of biological role, highly glycosylated atypical beta-defensin involved in several aspects of sperm function. Facilitates sperm transport in the female reproductive tract and contributes to sperm protection against immunodetection; both functions are probably implicating the negative surface charge provided by its O-linked oligosaccharides in the sperm glycocalyx. Involved in binding of sperm to oviductal epithelial cells to form a sperm reservoir until ovulation. Release from the sperm surface during capacitation and ovaluation by an elevation of oviductal fluid pH is unmasking other surface components and allows sperm to penetrate the cumulus matrix and bind to the zona pellucida of the oocyte. In vitro has antimicrobial activity and may inhibit LPS-mediated inflammation. This Pongo pygmaeus (Bornean orangutan) protein is Beta-defensin 126 (DEFB126).